A 361-amino-acid polypeptide reads, in one-letter code: Chorismate synthase (361 aa).

Residues Arg-48 and Arg-54 each contribute to the NADP(+) site. Residues 125-127, 238-239, Gly-278, 293-297, and Arg-319 each bind FMN; these read RSS, NA, and KPTSS.

The protein belongs to the chorismate synthase family. In terms of assembly, homotetramer. Requires FMNH2 as cofactor.

The catalysed reaction is 5-O-(1-carboxyvinyl)-3-phosphoshikimate = chorismate + phosphate. The protein operates within metabolic intermediate biosynthesis; chorismate biosynthesis; chorismate from D-erythrose 4-phosphate and phosphoenolpyruvate: step 7/7. Catalyzes the anti-1,4-elimination of the C-3 phosphate and the C-6 proR hydrogen from 5-enolpyruvylshikimate-3-phosphate (EPSP) to yield chorismate, which is the branch point compound that serves as the starting substrate for the three terminal pathways of aromatic amino acid biosynthesis. This reaction introduces a second double bond into the aromatic ring system. In Yersinia pseudotuberculosis serotype IB (strain PB1/+), this protein is Chorismate synthase.